Consider the following 83-residue polypeptide: Three-finger toxin W-IV (83 aa).

The first 21 residues, 1–21 (MKTLLLTLVVVTIVCLDLGHT), serve as a signal peptide directing secretion. Disulfide bonds link Cys24-Cys45, Cys38-Cys62, Cys64-Cys75, and Cys76-Cys81.

The protein belongs to the three-finger toxin family. Short-chain subfamily. Type I alpha-neurotoxin sub-subfamily. Expressed by the venom gland.

It is found in the secreted. Its function is as follows. Binds to muscle nicotinic acetylcholine receptor (nAChR) and inhibit acetylcholine from binding to the receptor, thereby impairing neuromuscular transmission. This is Three-finger toxin W-IV from Walterinnesia aegyptia (Desert black snake).